Here is a 173-residue protein sequence, read N- to C-terminus: NAD(P)H-quinone oxidoreductase subunit J (173 aa).

Belongs to the complex I 30 kDa subunit family. As to quaternary structure, NDH-1 can be composed of about 15 different subunits; different subcomplexes with different compositions have been identified which probably have different functions.

It is found in the cellular thylakoid membrane. The catalysed reaction is a plastoquinone + NADH + (n+1) H(+)(in) = a plastoquinol + NAD(+) + n H(+)(out). The enzyme catalyses a plastoquinone + NADPH + (n+1) H(+)(in) = a plastoquinol + NADP(+) + n H(+)(out). NDH-1 shuttles electrons from an unknown electron donor, via FMN and iron-sulfur (Fe-S) centers, to quinones in the respiratory and/or the photosynthetic chain. The immediate electron acceptor for the enzyme in this species is believed to be plastoquinone. Couples the redox reaction to proton translocation, and thus conserves the redox energy in a proton gradient. Cyanobacterial NDH-1 also plays a role in inorganic carbon-concentration. The polypeptide is NAD(P)H-quinone oxidoreductase subunit J (Prochlorococcus marinus (strain NATL2A)).